Consider the following 580-residue polypeptide: Myb-like protein C (580 aa).

Disordered stretches follow at residues methionine 1–asparagine 58, glutamine 73–serine 101, asparagine 121–asparagine 203, and serine 354–asparagine 380. 3 stretches are compositionally biased toward low complexity: residues asparagine 20–asparagine 47, asparagine 87–serine 101, and proline 126–asparagine 203. Basic residues predominate over residues lysine 361–valine 371. 2 HTH myb-type domains span residues arginine 368–isoleucine 430 and arginine 431–valine 482. DNA-binding regions (H-T-H motif) lie at residues tryptophan 402–leucine 426 and tryptophan 454–methionine 478. One can recognise a Myb-like domain in the interval tryptophan 484–asparagine 546.

The protein localises to the nucleus. Its function is as follows. Transcription activator required for the culmination, at the time of the fruiting body formation. Regulates genes involved in the cell differentiation within the fruiting body. The polypeptide is Myb-like protein C (mybC) (Dictyostelium discoideum (Social amoeba)).